The sequence spans 445 residues: Adenylosuccinate synthetase (445 aa).

GTP is bound by residues 12–18 (GDEGKGK) and 40–42 (GHT). The Proton acceptor role is filled by Asp-13. Mg(2+)-binding residues include Asp-13 and Gly-40. Residues 13 to 16 (DEGK), 38 to 41 (NAGH), Thr-128, Arg-142, Gln-223, Thr-238, and Arg-302 each bind IMP. Residue His-41 is the Proton donor of the active site. 298–304 (TTTGRKR) contacts substrate. GTP is bound by residues Arg-304, 330–332 (KLD), and 411–413 (SLG).

This sequence belongs to the adenylosuccinate synthetase family. Homodimer. Mg(2+) serves as cofactor.

It is found in the cytoplasm. It carries out the reaction IMP + L-aspartate + GTP = N(6)-(1,2-dicarboxyethyl)-AMP + GDP + phosphate + 2 H(+). Its pathway is purine metabolism; AMP biosynthesis via de novo pathway; AMP from IMP: step 1/2. Functionally, plays an important role in the de novo pathway of purine nucleotide biosynthesis. Catalyzes the first committed step in the biosynthesis of AMP from IMP. The protein is Adenylosuccinate synthetase of Cyanothece sp. (strain PCC 7425 / ATCC 29141).